A 373-amino-acid chain; its full sequence is RNA 3'-terminal phosphate cyclase-like protein (373 aa).

It belongs to the RNA 3'-terminal cyclase family. Type 2 subfamily. As to quaternary structure, part of the small subunit (SSU) processome, composed of more than 70 proteins and the RNA chaperone small nucleolar RNA (snoRNA) U3. Interacts with BMS1.

The protein localises to the nucleus. It is found in the nucleolus. Functionally, as part of the small subunit (SSU) processome, it plays a role in 40S-ribosomal-subunit biogenesis in the early pre-rRNA processing steps at sites A0, A1 and A2 that are required for proper maturation of the 18S RNA. Activates BMS1 by promoting GDP/GTP exchange. Does not have cyclase activity. In Homo sapiens (Human), this protein is RNA 3'-terminal phosphate cyclase-like protein.